Consider the following 547-residue polypeptide: Probable FMN/FAD exporter YeeO (547 aa).

11 helical membrane passes run 94–114, 139–159, 174–194, 211–231, 246–268, 281–301, 318–338, 350–370, 404–424, 439–459, and 486–506; these read ITPL…MGVL, VIMA…AFSL, SLVI…HFGE, LALT…ITLI, LLIN…YGLF, GLTI…AIGF, FSII…SVLF, AGMG…AALI, VFWL…PFAG, VVVI…ASWV, and VVVG…VWMG.

Belongs to the multi antimicrobial extrusion (MATE) (TC 2.A.66.1) family.

The protein resides in the cell inner membrane. Its function is as follows. A transporter able to export peptides and flavins. When overexpressed allows cells deleted for multiple peptidases (pepA, pepB, pepD and pepN) to grow in the presence of dipeptides Ala-Gln or Gly-Tyr which otherwise inhibit growth. Cells overexpressing this protein have decreased intracellular levels of Ala-Gln dipeptide, and in a system that produces the Ala-Gln dipeptide, overproduction of this protein increases its export. When overexpressed increases secretion of FMN and FAD but not riboflavin; intracellular concentrations of FMN and riboflavin rise, possibly to compensate for increased secretion. Increased overexpression causes slight cell elongation. The chain is Probable FMN/FAD exporter YeeO (yeeO) from Escherichia coli (strain K12).